Reading from the N-terminus, the 299-residue chain is GTPase Era (299 aa).

Positions 5–172 constitute an Era-type G domain; it reads KSGFVSIIGR…IDVLKTYLPE (168 aa). The interval 13-20 is G1; sequence GRPNVGKS. Residue 13-20 participates in GTP binding; it reads GRPNVGKS. A G2 region spans residues 39–43; it reads QTTRN. The G3 stretch occupies residues 60 to 63; that stretch reads DTPG. GTP contacts are provided by residues 60-64 and 122-125; these read DTPGI and NKID. The G4 stretch occupies residues 122–125; the sequence is NKID. A G5 region spans residues 151–153; the sequence is ISA. Positions 203–280 constitute a KH type-2 domain; the sequence is TSEEIPHAIG…YLELWVKVQR (78 aa).

This sequence belongs to the TRAFAC class TrmE-Era-EngA-EngB-Septin-like GTPase superfamily. Era GTPase family. As to quaternary structure, monomer.

It localises to the cytoplasm. Its subcellular location is the cell membrane. In terms of biological role, an essential GTPase that binds both GDP and GTP, with rapid nucleotide exchange. Plays a role in 16S rRNA processing and 30S ribosomal subunit biogenesis and possibly also in cell cycle regulation and energy metabolism. The protein is GTPase Era of Staphylococcus aureus (strain bovine RF122 / ET3-1).